Here is a 309-residue protein sequence, read N- to C-terminus: Tyrosine recombinase XerD (309 aa).

Positions 3 to 88 (MRASLAIENF…ALRQFFRFLY (86 aa)) constitute a Core-binding (CB) domain. Residues 109-302 (PLPKIMSVEN…LEERLHKLVS (194 aa)) enclose the Tyr recombinase domain. Catalysis depends on residues Arg-158, Lys-182, His-254, Arg-257, and His-280. The active-site O-(3'-phospho-DNA)-tyrosine intermediate is Tyr-289.

It belongs to the 'phage' integrase family. XerD subfamily. As to quaternary structure, forms a cyclic heterotetrameric complex composed of two molecules of XerC and two molecules of XerD.

It localises to the cytoplasm. Site-specific tyrosine recombinase, which acts by catalyzing the cutting and rejoining of the recombining DNA molecules. The XerC-XerD complex is essential to convert dimers of the bacterial chromosome into monomers to permit their segregation at cell division. It also contributes to the segregational stability of plasmids. In Brucella melitensis biotype 1 (strain ATCC 23456 / CCUG 17765 / NCTC 10094 / 16M), this protein is Tyrosine recombinase XerD.